Consider the following 211-residue polypeptide: Ribonuclease MRP protein subunit rmp1 (211 aa).

A helical transmembrane segment spans residues 73–93 (PALGLVLLGILARVWFVMGGI). Serine 156 carries the post-translational modification Phosphoserine. The segment at 178-211 (SQGTKRKSKNSNSTVKKKKKRARKGRDEIDDIFG) is disordered. A compositionally biased stretch (basic residues) spans 181–201 (TKRKSKNSNSTVKKKKKRARK).

As to quaternary structure, component of RNase MRP complex which consists of an RNA moiety and at least 10 protein subunits.

Its subcellular location is the membrane. The protein localises to the nucleus. The protein resides in the nucleolus. In terms of biological role, functions as part of ribonuclease MRP (RNase MRP), which is involved in rRNA processing in mitochondria. In Schizosaccharomyces pombe (strain 972 / ATCC 24843) (Fission yeast), this protein is Ribonuclease MRP protein subunit rmp1.